The following is a 257-amino-acid chain: Phosphonates import ATP-binding protein PhnC (257 aa).

In terms of domain architecture, ABC transporter spans I4 to I248. Position 37-44 (G37–S44) interacts with ATP.

This sequence belongs to the ABC transporter superfamily. Phosphonates importer (TC 3.A.1.9.1) family. In terms of assembly, the complex is composed of two ATP-binding proteins (PhnC), two transmembrane proteins (PhnE) and a solute-binding protein (PhnD).

The protein resides in the cell membrane. It catalyses the reaction phosphonate(out) + ATP + H2O = phosphonate(in) + ADP + phosphate + H(+). Its function is as follows. Part of the ABC transporter complex PhnCDE involved in phosphonates import. Responsible for energy coupling to the transport system. The sequence is that of Phosphonates import ATP-binding protein PhnC from Staphylococcus aureus (strain COL).